Here is a 243-residue protein sequence, read N- to C-terminus: Flavin-dependent thymidylate synthase (243 aa).

Residues 2–207 enclose the ThyX domain; sequence VKVKLINYTP…ELKPIIEWAK (206 aa). FAD-binding positions include Ser-56, 80–82, and Gln-88; that span reads RHR. Residues 77 to 80, 88 to 92, and Arg-146 contribute to the dUMP site; these read QLVR and QQSQR. Residues 80–90 carry the ThyX motif motif; it reads RHRIASYTQQS. FAD is bound by residues 162-164 and His-168; that span reads NLR. Arg-173 contributes to the dUMP binding site. Residue Arg-173 is the Involved in ionization of N3 of dUMP, leading to its activation of the active site.

It belongs to the thymidylate synthase ThyX family. In terms of assembly, homotetramer. The cofactor is FAD.

It catalyses the reaction dUMP + (6R)-5,10-methylene-5,6,7,8-tetrahydrofolate + NADPH + H(+) = dTMP + (6S)-5,6,7,8-tetrahydrofolate + NADP(+). The protein operates within pyrimidine metabolism; dTTP biosynthesis. Functionally, catalyzes the reductive methylation of 2'-deoxyuridine-5'-monophosphate (dUMP) to 2'-deoxythymidine-5'-monophosphate (dTMP) while utilizing 5,10-methylenetetrahydrofolate (mTHF) as the methyl donor, and NADPH and FADH(2) as the reductant. The chain is Flavin-dependent thymidylate synthase from Pyrococcus horikoshii (strain ATCC 700860 / DSM 12428 / JCM 9974 / NBRC 100139 / OT-3).